The following is a 718-amino-acid chain: MVGIDLNTVEEEEDEEEGGATGTVTAPAEARAGGAVCLELWHACAGPVAPLPRKGSAVVYLPQGHLEHLGAAPGSGPGAAVPPHVFCRVVDVSLHADAATDEVYAQVSLVADNEEVERRMREGEDGAACDGEGEDAVKRPARIPHMFCKTLTASDTSTHGGFSVPRRAAEDCFPPLDYSLQRPFQELVAKDLHGTEWRFRHIYRGQPRRHLLTTGWSGFINKKKLVSGDAVLFLRGEDGELRLGVRRAAQLKNASPFPALHNQISNTSSLSEVAHAVAVKSIFHIYYNPRLSQSEFIIPYWKFMRSFSQPFSVGMRFKLRYESEDASERRRTGIIIGSREADPMWHGSKWKCLVVKWDDDVECRRPNGVSPWEIELSGSVSGSHLSTPHSKRLKSCFPQVNPDIVLPNGSVSSDFAESARFHKVLQGQELLGLKTRDGTVNTASQATEARNFQYTDERSCSINMSNNILGVPRLGVKTPSGNPGFSYHCSGFGESQRFQEVLQGQEVFRPYRGGTLSDACIRGSGFRQPDGNHAPGAAFKWLAPQGCDHHGITTSVLPQASSPSSVLMFPQTSSKMPGLEYIYGCLDRNENSRHFKIGPTQDMTRTDQTLRLWPHLISGKVLDECTRNEKLHSPVSGAEHESNNKCLNTNGCKIFGISLTEKAQAGDEVDCGNASYHSRLQSLKPQMPKSLGSSCATVHEQRPVVGRVVDISAVNTMI.

The tract at residues 1 to 24 (MVGIDLNTVEEEEDEEEGGATGTV) is disordered. A compositionally biased stretch (acidic residues) spans 8–18 (TVEEEEDEEEG). Residues 147 to 249 (FCKTLTASDT…ELRLGVRRAA (103 aa)) constitute a DNA-binding region (TF-B3).

Belongs to the ARF family. In terms of assembly, homo and heterodimers. Expressed in roots, culms, leaves and young panicles.

It localises to the nucleus. Auxin response factors (ARFs) are transcriptional factors that bind specifically to the DNA sequence 5'-TGTCTC-3' found in the auxin-responsive promoter elements (AuxREs). The polypeptide is Auxin response factor 2 (ARF2) (Oryza sativa subsp. japonica (Rice)).